The primary structure comprises 20 residues: Short cationic peptide-4d (20 aa).

Position 20 is a glutamic acid 1-amide (glutamate 20).

As to expression, expressed by the venom gland.

It is found in the secreted. The sequence is that of Short cationic peptide-4d from Cupiennius salei (American wandering spider).